The following is a 463-amino-acid chain: Protein phosphatase PP2A regulatory subunit B (463 aa).

WD repeat units follow at residues 27–66 (TEAD…KGCE) and 87–128 (EIEE…LKVV). Position 134 is a phosphoserine (Ser-134). WD repeat units lie at residues 174-212 (AHAY…HSFN), 223-263 (ELTE…LCDN), 282-320 (EIIS…APVK), and 337-378 (ENDC…PGDR).

The protein belongs to the phosphatase 2A regulatory subunit B family. As to quaternary structure, PP2A exists in several trimeric forms, all of which consist of a core composed of a catalytic subunit associated with a 65 kDa (PR65) (Subunit A) and a 55 kDa (PR55) (Subunit B) regulatory subunit.

In terms of biological role, phosphatase 2A affects a variety of biological processes in the cell such as transcription, cell cycle progression and cellular morphogenesis, and provides an initial identification of critical substrates for this phosphatase. The regulatory subunit may direct the catalytic subunit to distinct, albeit overlapping, subsets of substrates. The polypeptide is Protein phosphatase PP2A regulatory subunit B (pab1) (Schizosaccharomyces pombe (strain 972 / ATCC 24843) (Fission yeast)).